The sequence spans 91 residues: Cytochrome c6 (91 aa).

Positions 17, 20, 21, and 63 each coordinate heme c.

This sequence belongs to the cytochrome c family. PetJ subfamily. As to quaternary structure, monomer. In terms of processing, binds 1 heme c group covalently per subunit.

It localises to the plastid. It is found in the chloroplast thylakoid lumen. Functionally, functions as an electron carrier between membrane-bound cytochrome b6-f and photosystem I in oxygenic photosynthesis. The chain is Cytochrome c6 (petJ) from Cladophora glomerata.